The primary structure comprises 184 residues: Signal peptidase I S (184 aa).

At 1 to 18 the chain is on the cytoplasmic side; sequence MKSENVSKKKSILEWAKA. The chain crosses the membrane as a helical span at residues 19–39; the sequence is IVIAVVLALLIRNFIFAPYVV. The Extracellular segment spans residues 40–184; the sequence is DGDSMYPTLH…YPFNEMRKTN (145 aa). Catalysis depends on residues Ser43 and Lys83.

This sequence belongs to the peptidase S26 family.

It is found in the cell membrane. The catalysed reaction is Cleavage of hydrophobic, N-terminal signal or leader sequences from secreted and periplasmic proteins.. Not essential for cell viability, but required for efficient secretion of many proteins. The sequence is that of Signal peptidase I S (sipS) from Bacillus subtilis (strain 168).